A 248-amino-acid chain; its full sequence is Probable transcriptional regulatory protein BH14810 (248 aa).

It belongs to the TACO1 family.

Its subcellular location is the cytoplasm. The protein is Probable transcriptional regulatory protein BH14810 of Bartonella henselae (strain ATCC 49882 / DSM 28221 / CCUG 30454 / Houston 1) (Rochalimaea henselae).